Consider the following 228-residue polypeptide: PKHD-type hydroxylase XCV3086 (228 aa).

In terms of domain architecture, Fe2OG dioxygenase spans 78–180 (RIYPPLFNRY…RVACFFWTQS (103 aa)). 3 residues coordinate Fe cation: His96, Asp98, and His161. Arg171 is a 2-oxoglutarate binding site.

The cofactor is Fe(2+). It depends on L-ascorbate as a cofactor.

The chain is PKHD-type hydroxylase XCV3086 from Xanthomonas euvesicatoria pv. vesicatoria (strain 85-10) (Xanthomonas campestris pv. vesicatoria).